Reading from the N-terminus, the 971-residue chain is Kinesin-like protein KIN-6 (971 aa).

2 disordered regions span residues 1–44 (MEEK…SSLA) and 93–121 (TTTT…RNPE). Over residues 29-39 (ATPFTTTTKPP) the composition is skewed to low complexity. One can recognise a Kinesin motor domain in the interval 76-460 (SLKIFLRIKP…LRQASPYMKI (385 aa)). 202–209 (GPSGSGKT) provides a ligand contact to ATP. Positions 700-709 (RREAGSEESS) are enriched in basic and acidic residues. 2 disordered regions span residues 700-856 (RREA…TEEM) and 872-917 (KTTN…RLQP). The segment covering 768 to 783 (QSVNSEENVGIPSTIT) has biased composition (polar residues). Residues 785–797 (VEAEVTDFQRDQN) are compositionally biased toward basic and acidic residues. Positions 809–827 (EVSQDCINSGLSNVQTKSA) are enriched in polar residues. Over residues 831 to 842 (RFPDSEKQERNR) the composition is skewed to basic and acidic residues. The span at 903 to 915 (KKQKNGQKPKRRL) shows a compositional bias: basic residues.

This sequence belongs to the TRAFAC class myosin-kinesin ATPase superfamily. Kinesin family. KIN-6 subfamily.

The sequence is that of Kinesin-like protein KIN-6 from Arabidopsis thaliana (Mouse-ear cress).